Here is a 524-residue protein sequence, read N- to C-terminus: Phosphoenolpyruvate carboxykinase (ATP) (524 aa).

3 residues coordinate substrate: Arg52, Tyr188, and Lys194. Residues Lys194, His213, and 229-237 (GLSGTGKTT) contribute to the ATP site. 2 residues coordinate Mn(2+): Lys194 and His213. Asp250 lines the Mn(2+) pocket. The ATP site is built by Glu278, Arg314, and Thr439. Arg314 is a substrate binding site.

The protein belongs to the phosphoenolpyruvate carboxykinase (ATP) family. Requires Mn(2+) as cofactor.

It localises to the cytoplasm. The catalysed reaction is oxaloacetate + ATP = phosphoenolpyruvate + ADP + CO2. It participates in carbohydrate biosynthesis; gluconeogenesis. Functionally, involved in the gluconeogenesis. Catalyzes the conversion of oxaloacetate (OAA) to phosphoenolpyruvate (PEP) through direct phosphoryl transfer between the nucleoside triphosphate and OAA. The polypeptide is Phosphoenolpyruvate carboxykinase (ATP) (Campylobacter jejuni subsp. jejuni serotype O:2 (strain ATCC 700819 / NCTC 11168)).